Consider the following 603-residue polypeptide: MFLPTTKEEMDEWGWEELDIIIVTGDAYIDHYLFGASVVGRYLVEHGYRVGIIAQPDWKNLDDIKRLGKPNYFFAVTAGNLDSMLAHYTPQKRLRDFDSMSNEGIRKRPDRATIVYTNLIKRAFKGVPIALGGIEASLRRFSHYDYWDNKVRKSVLIDSKADILMYGMGEKSILAITKALESGENIKDLEINGTVVRVNERKIGDIKERYETKELPSHEEVVNSKEKYAEMHRKLMTMDKVIYQKVGNQYLVQFPPIYLTEKEMDEIYEMPFERRAHPSYSYVPGIVPVQFSVVTHRGCFGGCSFCSILHHQGKVIQNRSERSILKEIRKLLNHEDFKGVIQDIGAPTANMYRMGCKKGLADRCPKNCLYPEPCENLIINHKPLIKLYRKIRDIVGDDVRVYVRSGVRYDLIMYDEEYGEDYIKELSKYHVSGRLKVAPEHISKKVCKAIQKPDGRLFKKFLEKYREIAEKVGGIKEVLPYWLIAHPNCSIKEMIELAEFIHKNNCYSRQVQVFTPTPMTLSTTMYHTGINPITNEKVYVPYTYREKKIQKAICLYREEENWEKALEGFKMVGYKGVIYRWIMEQMEKKKKQKKDKNKKNRLN.

In terms of domain architecture, Radical SAM core spans 285–557; sequence GIVPVQFSVV…KIQKAICLYR (273 aa). [4Fe-4S] cluster contacts are provided by cysteine 299, cysteine 303, and cysteine 306.

It belongs to the UPF0313 family. [4Fe-4S] cluster serves as cofactor.

In Methanocaldococcus jannaschii (strain ATCC 43067 / DSM 2661 / JAL-1 / JCM 10045 / NBRC 100440) (Methanococcus jannaschii), this protein is UPF0313 protein MJ1155.